The chain runs to 210 residues: Ribosomal RNA large subunit methyltransferase E (210 aa).

S-adenosyl-L-methionine is bound by residues Gly-55, Trp-57, Asp-75, Asp-93, and Asp-117. Lys-157 (proton acceptor) is an active-site residue. Positions 175–210 are disordered; it reads YRQVKTTKPPSSRKKSSEMYVVGLDFKPKKNKKSKD.

The protein belongs to the class I-like SAM-binding methyltransferase superfamily. RNA methyltransferase RlmE family.

The protein resides in the cytoplasm. The catalysed reaction is uridine(2552) in 23S rRNA + S-adenosyl-L-methionine = 2'-O-methyluridine(2552) in 23S rRNA + S-adenosyl-L-homocysteine + H(+). Functionally, specifically methylates the uridine in position 2552 of 23S rRNA at the 2'-O position of the ribose in the fully assembled 50S ribosomal subunit. This chain is Ribosomal RNA large subunit methyltransferase E, found in Methanobrevibacter smithii (strain ATCC 35061 / DSM 861 / OCM 144 / PS).